A 474-amino-acid polypeptide reads, in one-letter code: TOM1-like protein 1 (474 aa).

The 133-residue stretch at 22-154 (ATFAGVLTED…DLLKKGVQFP (133 aa)) folds into the VHS domain. The disordered stretch occupies residues 153–180 (FPPSDGEPETRQEAGQISPNRPTSVPTA). A compositionally biased stretch (polar residues) spans 165–178 (EAGQISPNRPTSVP). Position 170 is a phosphoserine (S170). The 89-residue stretch at 199–287 (EQIGKLHSEL…AVLGYERFTR (89 aa)) folds into the GAT domain. A disordered region spans residues 291-317 (RLLEQKRNRTEATRTSSEPSAPSCDLL). The segment covering 293–302 (LEQKRNRTEA) has biased composition (basic and acidic residues). Residues S313 and S320 each carry the phosphoserine modification. Residues 392–395 (YDNF) are interaction with GRB2. An SH3-binding motif is present at residues 420–424 (LPPLP). The tract at residues 441 to 444 (YEVM) is interaction with PIK3R1. Y457 is modified (phosphotyrosine). An SH2-binding motif is present at residues 457-460 (YEEI).

The protein belongs to the TOM1 family. Interacts with LYN. Interacts with the SH2 and SH3 domains of FYN when phosphorylated. Also interacts with GRB2 and PIK3R1 when phosphorylated. Post-translationally, phosphorylated on tyrosines by LYN. Phosphorylated on tyrosines by FYN. Strongly expressed in brain and kidney, expressed at intermediate levels skin and heart, and weakly expressed in thymus. Not expressed in liver and spleen.

It localises to the golgi apparatus. The protein resides in the golgi stack. Its subcellular location is the endosome membrane. The protein localises to the cytoplasm. It is found in the membrane. In terms of biological role, probable adapter protein involved in signaling pathways. Interacts with the SH2 and SH3 domains of various signaling proteins when it is phosphorylated. May promote FYN activation, possibly by disrupting intramolecular SH3-dependent interactions. The chain is TOM1-like protein 1 (Tom1l1) from Mus musculus (Mouse).